The sequence spans 345 residues: MFSSLYPLARASLFKMDAEDAHHLTLRMLGAAGRTGLARALSSRVPDAPRTVMGLTFRNPVGLAAGLDKDGAAIDGFAALGFGFIEVGTVTPRAQPGNPRPRMFRLPEAGAIINRMGFNNSGVDQFVKNVQAARYRGVLGLNIGKNADTPIERAADDYLYCLERVYPFASYVTINISSPNTKNLRQLQGAGELDALLAALKNKQQRLADLHGKLVPLALKIAPDLDDEQVKDIAATLLRHNIEGVIATNTTLSRDAVKGLPHADEAGGLSGRPVFDASNAVIRKLHAELGDAVPIIGVGGIFSGDDARAKLAAGASLVQLYTGFIYRGPALVAECVKAIARGQTR.

FMN is bound by residues 65 to 69 and Thr-89; that span reads AGLDK. Substrate is bound at residue Lys-69. Position 114–118 (114–118) interacts with substrate; it reads NRMGF. FMN-binding residues include Asn-142 and Asn-175. Asn-175 lines the substrate pocket. Ser-178 functions as the Nucleophile in the catalytic mechanism. Residue Asn-180 participates in substrate binding. Lys-220 and Thr-248 together coordinate FMN. 249–250 contributes to the substrate binding site; sequence NT. Residues Gly-271, Gly-300, and 321 to 322 contribute to the FMN site; that span reads YT.

It belongs to the dihydroorotate dehydrogenase family. Type 2 subfamily. In terms of assembly, monomer. FMN serves as cofactor.

It localises to the cell membrane. It catalyses the reaction (S)-dihydroorotate + a quinone = orotate + a quinol. It functions in the pathway pyrimidine metabolism; UMP biosynthesis via de novo pathway; orotate from (S)-dihydroorotate (quinone route): step 1/1. Catalyzes the conversion of dihydroorotate to orotate with quinone as electron acceptor. The chain is Dihydroorotate dehydrogenase (quinone) from Burkholderia thailandensis (strain ATCC 700388 / DSM 13276 / CCUG 48851 / CIP 106301 / E264).